We begin with the raw amino-acid sequence, 247 residues long: Protein LIFEGUARD 4 (247 aa).

A run of 7 helical transmembrane segments spans residues 42–62 (VYSI…TVVF), 75–95 (AGLA…CPLY), 105–125 (YLLL…TCAF), 130–150 (VILE…VYTF), 165–185 (FLFG…FFPL), 188–208 (ISVM…IVYD), and 222–242 (IWAA…LLTI).

Belongs to the BI1 family.

The protein resides in the membrane. This Arabidopsis thaliana (Mouse-ear cress) protein is Protein LIFEGUARD 4.